Here is a 305-residue protein sequence, read N- to C-terminus: 4-hydroxy-tetrahydrodipicolinate synthase 1 (305 aa).

Thr53 contributes to the pyruvate binding site. The active-site Proton donor/acceptor is the Tyr141. The active-site Schiff-base intermediate with substrate is Lys169. Val209 provides a ligand contact to pyruvate.

Belongs to the DapA family. In terms of assembly, homotetramer; dimer of dimers.

The protein localises to the cytoplasm. The catalysed reaction is L-aspartate 4-semialdehyde + pyruvate = (2S,4S)-4-hydroxy-2,3,4,5-tetrahydrodipicolinate + H2O + H(+). Its pathway is amino-acid biosynthesis; L-lysine biosynthesis via DAP pathway; (S)-tetrahydrodipicolinate from L-aspartate: step 3/4. In terms of biological role, catalyzes the condensation of (S)-aspartate-beta-semialdehyde [(S)-ASA] and pyruvate to 4-hydroxy-tetrahydrodipicolinate (HTPA). The sequence is that of 4-hydroxy-tetrahydrodipicolinate synthase 1 from Streptomyces coelicolor (strain ATCC BAA-471 / A3(2) / M145).